Here is a 129-residue protein sequence, read N- to C-terminus: Phenazine antibiotic resistance protein EhpR (129 aa).

The region spanning 10 to 128 is the VOC domain; sequence TPNLQLVYVS…DGHIIRVCPL (119 aa). Residues 42–43 and Trp-57 each bind D-alanylgriseoluteate; that span reads RY.

In terms of assembly, homodimer.

Functionally, required for resistance to the phenazine antibiotic D-alanylgriseoluteic acid (AGA), an antibiotic produced by E.agglomerans itself, and thus protects the bacterium against phenazine toxicity. Probably binds AGA and acts as a chaperone that works in tandem with a membrane transporter for subsequent antibiotic secretion. This is Phenazine antibiotic resistance protein EhpR from Enterobacter agglomerans (Erwinia herbicola).